The chain runs to 216 residues: Urease accessory protein UreG (216 aa).

Residue 25-32 participates in GTP binding; that stretch reads GPVGSGKT.

This sequence belongs to the SIMIBI class G3E GTPase family. UreG subfamily. Homodimer. UreD, UreF and UreG form a complex that acts as a GTP-hydrolysis-dependent molecular chaperone, activating the urease apoprotein by helping to assemble the nickel containing metallocenter of UreC. The UreE protein probably delivers the nickel.

The protein resides in the cytoplasm. Facilitates the functional incorporation of the urease nickel metallocenter. This process requires GTP hydrolysis, probably effectuated by UreG. This Burkholderia pseudomallei (strain 1710b) protein is Urease accessory protein UreG.